Reading from the N-terminus, the 250-residue chain is Imidazole glycerol phosphate synthase subunit HisF (250 aa).

Residues aspartate 11 and aspartate 130 contribute to the active site.

This sequence belongs to the HisA/HisF family. Heterodimer of HisH and HisF.

The protein resides in the cytoplasm. It catalyses the reaction 5-[(5-phospho-1-deoxy-D-ribulos-1-ylimino)methylamino]-1-(5-phospho-beta-D-ribosyl)imidazole-4-carboxamide + L-glutamine = D-erythro-1-(imidazol-4-yl)glycerol 3-phosphate + 5-amino-1-(5-phospho-beta-D-ribosyl)imidazole-4-carboxamide + L-glutamate + H(+). The protein operates within amino-acid biosynthesis; L-histidine biosynthesis; L-histidine from 5-phospho-alpha-D-ribose 1-diphosphate: step 5/9. Functionally, IGPS catalyzes the conversion of PRFAR and glutamine to IGP, AICAR and glutamate. The HisF subunit catalyzes the cyclization activity that produces IGP and AICAR from PRFAR using the ammonia provided by the HisH subunit. In Elusimicrobium minutum (strain Pei191), this protein is Imidazole glycerol phosphate synthase subunit HisF.